Here is a 366-residue protein sequence, read N- to C-terminus: Tyrosyl-DNA phosphodiesterase 2 (366 aa).

At M1 the chain carries N-acetylmethionine. The segment covering 1–22 has biased composition (low complexity); sequence MASGSSSDAAESAEPAAAPAAA. Residues 1 to 30 form a disordered region; the sequence is MASGSSSDAAESAEPAAAPAAAETEEDQVK. K30 participates in a covalent cross-link: Glycyl lysine isopeptide (Lys-Gly) (interchain with G-Cter in SUMO2). At T95 the chain carries Phosphothreonine; by ACVR1B. Positions 126–130 are interaction with 5' end of substrate DNA; that stretch reads NIDGL. Positions 128 and 158 each coordinate Mg(2+). The segment at 232–237 is interaction with 5' end of substrate DNA; sequence HLESTR. D268 functions as the Proton donor/acceptor in the catalytic mechanism. The tract at residues 270-272 is interaction with 5' end of substrate DNA; sequence NLR.

Belongs to the CCR4/nocturin family. As to quaternary structure, interacts with TRAF2, TRAF3, TRAF5, TRAF6, TNFRSF8/CD30, TNFRSF5/CD40, TNFRSF1B/TNF-R75, ETS1, ETS2, FLI1, SMAD3 and ACVR1B/ALK4. The cofactor is Mg(2+). Requires Mn(2+) as cofactor. Ubiquitinated by TRAF6.

The protein localises to the nucleus. It is found in the PML body. Its subcellular location is the nucleolus. The protein resides in the cytoplasm. Its function is as follows. DNA repair enzyme that can remove a variety of covalent adducts from DNA through hydrolysis of a 5'-phosphodiester bond, giving rise to DNA with a free 5' phosphate. Catalyzes the hydrolysis of dead-end complexes between DNA and the topoisomerase 2 (TOP2) active site tyrosine residue. The 5'-tyrosyl DNA phosphodiesterase activity can enable the repair of TOP2-induced DNA double-strand breaks/DSBs without the need for nuclease activity, creating a 'clean' DSB with 5'-phosphate termini that are ready for ligation. Thereby, protects the transcription of many genes involved in neurological development and maintenance from the abortive activity of TOP2. Hydrolyzes 5'-phosphoglycolates on protruding 5' ends on DSBs due to DNA damage by radiation and free radicals. Has preference for single-stranded DNA or duplex DNA with a 4 base pair overhang as substrate. Also has 3'-tyrosyl DNA phosphodiesterase activity, but less efficiently and much slower than TDP1. Constitutes the major if not only 5'-tyrosyl-DNA phosphodiesterase in cells. Also acts as an adapter by participating in the specific activation of MAP3K7/TAK1 in response to TGF-beta: associates with components of the TGF-beta receptor-TRAF6-TAK1 signaling module and promotes their ubiquitination dependent complex formation. Involved in non-canonical TGF-beta induced signaling routes. May also act as a negative regulator of ETS1 and may inhibit NF-kappa-B activation. Acts as a regulator of ribosome biogenesis following stress. The polypeptide is Tyrosyl-DNA phosphodiesterase 2 (Tdp2) (Rattus norvegicus (Rat)).